Here is a 759-residue protein sequence, read N- to C-terminus: MSEKVDVGESVKGDASENAVKEVAERPIVMIDNYDSFTWNVVQYLSNLEKRYPIMVFRNDEITVDELEKLNPLKLVLSPGPGHPARDGGICNEAISRFAGKIPILGVCMGLQCIFETMGGKVDSAGEIIHGKVSKINHDGLGFYQGIPQNISVTRYHSLAGKISSLPDCLDVTSWTENGVIMGARHKKYAIEGVQYHPESILSEYGKEYIQNFLNLTAGTWEENGIVMPTKNNAFNAAMRENSNSVSSTKIRKQESILEKIHAQRLIDIAESKRKPGLSVGDLQTYLNLNIAPPCINFYERLKQSKPALMAEVKRASPSKGDIKLDANAAIQALTYAQVGASVISVLTEPKWFKGSLNDLFVARKAVEHVANRPAILRKDFIIDPYQIMEARLNGADSVLLIVAMLSREQLESLYKFSKSLGMEPLVEVNCAEEMKTAIELGAKVIGVNNRNLHSFEVDLSTTSKLAEMVPDDVILAALSGISSPADVAHYSSQGVSAVLVGESLMRASDPAAFARELLNLSSSEISNGKKTSTPLVKVCGTRSLLAAKTIVESGGDLIGLIFVEKSKRKVDLSVAKEISHFVHTTNRKHISPKKAVTGQSWFDHQYENLASSPHPLLVGVFQNQPLEYIRSIIAEVNLDIVQLHGQEPFEWIHMLDRPVIKVFPLNSSEISRPNYHIVPLIDAYVGGESGGLGKKVDWEAASFIPVSYVLAGGLTPKNVQDAISVSRPAVVDVSSGVETDGKQDLEKIKAFINAVKEL.

Residues 27–223 (PIVMIDNYDS…LNLTAGTWEE (197 aa)) form the Glutamine amidotransferase type-1 domain. 80–82 (GPG) is a binding site for L-glutamine. Residue C108 is the Nucleophile; for GATase activity of the active site. Residues Q112 and 158–159 (SL) each bind L-glutamine. Catalysis depends on for GATase activity residues H197 and E199. Residues 257–519 (ILEKIHAQRL…DPAAFARELL (263 aa)) form an indole-3-glycerol phosphate synthase region. The interval 536 to 759 (LVKVCGTRSL…KAFINAVKEL (224 aa)) is N-(5'-phosphoribosyl)anthranilate isomerase.

The catalysed reaction is N-(5-phospho-beta-D-ribosyl)anthranilate = 1-(2-carboxyphenylamino)-1-deoxy-D-ribulose 5-phosphate. The enzyme catalyses 1-(2-carboxyphenylamino)-1-deoxy-D-ribulose 5-phosphate + H(+) = (1S,2R)-1-C-(indol-3-yl)glycerol 3-phosphate + CO2 + H2O. It carries out the reaction chorismate + L-glutamine = anthranilate + pyruvate + L-glutamate + H(+). Its pathway is amino-acid biosynthesis; L-tryptophan biosynthesis; L-tryptophan from chorismate: step 1/5. The protein operates within amino-acid biosynthesis; L-tryptophan biosynthesis; L-tryptophan from chorismate: step 3/5. It functions in the pathway amino-acid biosynthesis; L-tryptophan biosynthesis; L-tryptophan from chorismate: step 4/5. Trifunctional enzyme bearing the Gln amidotransferase (GATase) domain of anthranilate synthase, indole-glycerolphosphate synthase, and phosphoribosylanthranilate isomerase activities. The sequence is that of Multifunctional tryptophan biosynthesis protein (trp1) from Schizosaccharomyces pombe (strain 972 / ATCC 24843) (Fission yeast).